The sequence spans 265 residues: Orotidine 5'-phosphate decarboxylase (265 aa).

Residues Asp38, 60–62 (KTH), 92–101 (DRKFADIGKT), Tyr218, and Arg236 contribute to the substrate site. Lys94 functions as the Proton donor in the catalytic mechanism.

The protein belongs to the OMP decarboxylase family.

The enzyme catalyses orotidine 5'-phosphate + H(+) = UMP + CO2. The protein operates within pyrimidine metabolism; UMP biosynthesis via de novo pathway; UMP from orotate: step 2/2. This is Orotidine 5'-phosphate decarboxylase (URA3) from Cyberlindnera fabianii (Yeast).